The following is a 468-amino-acid chain: Putative magnesium transporter MRS2-G (468 aa).

2 disordered regions span residues 1–76 (MGRR…AGKV) and 182–205 (NGQP…VPRL). Low complexity-rich tracts occupy residues 14-23 (ASNASTSSST) and 31-45 (RLPS…SSPS). The span at 46 to 67 (PASPSPPPPSASHPAPPSPPLA) shows a compositional bias: pro residues. A compositionally biased stretch (basic and acidic residues) spans 187 to 197 (GDDHGEKHDDS). 2 helical membrane passes run 402–422 (LTLT…GAFA) and 437–457 (FFWP…IVLL).

The protein belongs to the CorA metal ion transporter (MIT) (TC 1.A.35.5) family.

Its subcellular location is the membrane. Putative magnesium transporter. The protein is Putative magnesium transporter MRS2-G (MRS2-G) of Oryza sativa subsp. indica (Rice).